A 236-amino-acid polypeptide reads, in one-letter code: 2-C-methyl-D-erythritol 4-phosphate cytidylyltransferase (236 aa).

The protein belongs to the IspD/TarI cytidylyltransferase family. IspD subfamily. In terms of assembly, homodimer.

The catalysed reaction is 2-C-methyl-D-erythritol 4-phosphate + CTP + H(+) = 4-CDP-2-C-methyl-D-erythritol + diphosphate. The protein operates within isoprenoid biosynthesis; isopentenyl diphosphate biosynthesis via DXP pathway; isopentenyl diphosphate from 1-deoxy-D-xylulose 5-phosphate: step 2/6. Its function is as follows. Catalyzes the formation of 4-diphosphocytidyl-2-C-methyl-D-erythritol from CTP and 2-C-methyl-D-erythritol 4-phosphate (MEP). This is 2-C-methyl-D-erythritol 4-phosphate cytidylyltransferase from Salmonella paratyphi C (strain RKS4594).